A 283-amino-acid polypeptide reads, in one-letter code: Tropomyosin (283 aa).

A coiled-coil region spans residues 1-283 (MDAIKKKMQA…LDSAFVELIL (283 aa)).

This sequence belongs to the tropomyosin family. In terms of assembly, homodimer.

In terms of biological role, tropomyosin, in association with the troponin complex, plays a central role in the calcium dependent regulation of muscle contraction. This chain is Tropomyosin, found in Locusta migratoria (Migratory locust).